A 441-amino-acid polypeptide reads, in one-letter code: UDP-N-acetylmuramoylalanine--D-glutamate ligase (441 aa).

Position 113–119 (113–119 (GSNAKST)) interacts with ATP.

Belongs to the MurCDEF family.

It localises to the cytoplasm. It carries out the reaction UDP-N-acetyl-alpha-D-muramoyl-L-alanine + D-glutamate + ATP = UDP-N-acetyl-alpha-D-muramoyl-L-alanyl-D-glutamate + ADP + phosphate + H(+). It participates in cell wall biogenesis; peptidoglycan biosynthesis. Cell wall formation. Catalyzes the addition of glutamate to the nucleotide precursor UDP-N-acetylmuramoyl-L-alanine (UMA). The chain is UDP-N-acetylmuramoylalanine--D-glutamate ligase from Alcanivorax borkumensis (strain ATCC 700651 / DSM 11573 / NCIMB 13689 / SK2).